Reading from the N-terminus, the 127-residue chain is Apolipoprotein C-IV (127 aa).

A signal peptide spans 1–27 (MSLLRNRLQDLPALCLCVLVLACIGAC).

It belongs to the apolipoprotein C4 family.

It is found in the secreted. May participate in lipoprotein metabolism. This Papio anubis (Olive baboon) protein is Apolipoprotein C-IV (APOC4).